The sequence spans 64 residues: MAQEQTKRGGGGGEDDDPTGSTAAGQERREKLTEETDDLLDEIDDVLEENAEDFVRAYVQKGGQ.

Residues 1–38 are disordered; it reads MAQEQTKRGGGGGEDDDPTGSTAAGQERREKLTEETDD. The ARC ATPase binding stretch occupies residues 21–58; it reads STAAGQERREKLTEETDDLLDEIDDVLEENAEDFVRAY. Positions 23–52 form a coiled coil; it reads AAGQERREKLTEETDDLLDEIDDVLEENAE. At Gln-64 the chain carries Deamidated glutamine. Gln-64 is covalently cross-linked (Isoglutamyl lysine isopeptide (Gln-Lys) (interchain with K-? in acceptor proteins)).

It belongs to the prokaryotic ubiquitin-like protein family. In terms of assembly, strongly interacts with the proteasome-associated ATPase ARC through a hydrophobic interface; the interacting region of Pup lies in its C-terminal half. There is one Pup binding site per ARC hexamer ring. Post-translationally, is modified by deamidation of its C-terminal glutamine to glutamate by the deamidase Dop, a prerequisite to the subsequent pupylation process.

It functions in the pathway protein degradation; proteasomal Pup-dependent pathway. Its function is as follows. Protein modifier that is covalently attached to lysine residues of substrate proteins, thereby targeting them for proteasomal degradation. The tagging system is termed pupylation. The chain is Prokaryotic ubiquitin-like protein Pup from Mycolicibacterium gilvum (strain PYR-GCK) (Mycobacterium gilvum (strain PYR-GCK)).